The following is a 558-amino-acid chain: REST corepressor spr-1 (558 aa).

The interval 1 to 106 (MDLYDDDGES…KVKGPLSNTN (106 aa)) is disordered. Acidic residues predominate over residues 36–56 (TIEENVPEVEENTLLEEDSLV). The span at 69 to 80 (KPSKSKRKRKRS) shows a compositional bias: basic residues. The ELM2 domain occupies 107 to 192 (KEINVGTEFQ…SAIAEVARRN (86 aa)). In terms of domain architecture, SANT 1 spans 193–244 (ELKDVWTDQEITLFENCYQIFGKNFSQIRSALCHRSLQSIVQFYYESKKRVK). The GATA-type zinc finger occupies 271–325 (AIFESMCDNCGEKAENMQINNAMNRPECRACLIYFNQTGVPRPTSLRLVLAERIR). Over residues 378 to 402 (CTENGNVGETSSPSAQKTEIQSESD) the composition is skewed to polar residues. Positions 378–406 (CTENGNVGETSSPSAQKTEIQSESDGSGP) are disordered. In terms of domain architecture, SANT 2 spans 481-532 (HYSQDWTQLERSQVIRCFNMYGAHFEHIADVIGTKTPDQVYQFYLENQKAID).

It belongs to the CoREST family. As to quaternary structure, probably part of a large repressor complex. Interacts with histone demethylase spr-5/lsd-1.

It is found in the nucleus. Its function is as follows. Probable corepressor protein, which probably participates in the transcriptional repression of the presenilin protein hop-1. Probably acts via the formation of a multiprotein complex that deacetylates and demethylates specific sites on histones. Acts redundantly with the transcriptional repressor lin-35 to play a role in vulval morphogenesis and promote germline proliferation. This Caenorhabditis elegans protein is REST corepressor spr-1.